A 981-amino-acid polypeptide reads, in one-letter code: MSPLKIHGPIRIRSMQTGITKWKEGSFEIVEKENKVSLVVHYNTGGIPRIFQLSHNIKNVVLRPSGAKQSRLMLTLQDNSFLSIDKVPSKDAEEMRLFLDAVHQNRLHAAMKPSQGSGSFGAILGSRTSQKETNRQLSYSDNQASSKRGSLETKDDIPFRKVLGNPGRGSIKTATGSGITVTRTIPSLTSASTPLRSGLLENRTEKRKRMLSSGSELNEDYPKENDSSSNNKAMTDPSRKYLTSSREKQLSLKQSEENRTSGLLPLQSSSFYGSRTGSKDYSSGSTNLDRTNVSGQTPSAKRSLGFLPQPAPLSVKKLRCNQDYTGWNKPRVPLSSHQQQQLQGFSNLGNTCYMNAILQSLFSLQSFANDLLKQGIPWKKIPLNALIRRFAHLLVKKDICNSETKKDLLKKVKNAISATAERFSGYMQNDAHEFLSQCLDQLKEDMEKLNKTWKTEPVPGEENSPDISATRVYTCPVITNLEFEVQHSIICKACGEIIPKREQFNDLSIDLPRRKKPLPPRSIQDSLDLFFRAEELEYSCEKCGGKCALVRHKFNRLPRILILHLKRYSFNVTLSLNNKIGQQVIIPRYLTLSSHCTENTKPPFTLGWSAHMAISRPLKASQMVNSCITSPSTPSKNFTFKSKSSLALCLDSDSEDELKRSVALSQRLCEMSGCEQQQDDLEKDSKPCRIEPDKSELENSGFDGMSEEELLAAVLEMSKREASPTLSHEDDDKPTSSPDTGFAEDDIQEMPENQDPVETEKPKTVTEPDPASFTEITKDCDENKENKTPEGSQGEVDWLQQYDMEREREEQELQQALAQSLQEQEAWEQKEDDDLKRATELSLQEFNNSFLDSLGSDEDSGNEDVLDMEYTEAEAEELKRNAETGNLPHSYRLISVVSHIGSTSSSGHYISDVYDIKKQAWFTYNDLEVSKIQEASVQSDRDRSGYIFFYMHKEIFDELLETEKNSQALSMEVGKTTRQAL.

Positions 32–34 (KEN) match the KEN box 1 motif. 2 consecutive short sequence motifs (D-box) follow at residues 71-79 (RLMLTLQDN) and 96-105 (RLFLDAVHQN). The disordered stretch occupies residues 111–308 (MKPSQGSGSF…SAKRSLGFLP (198 aa)). Ser114 bears the Phosphoserine mark. Positions 135–148 (RQLSYSDNQASSKR) are enriched in polar residues. Positions 149-159 (GSLETKDDIPF) are enriched in basic and acidic residues. Residues 160–168 (RKVLGNPGR) carry the D-box 3 motif. Ser170 is subject to Phosphoserine. A compositionally biased stretch (polar residues) spans 172–195 (KTATGSGITVTRTIPSLTSASTPL). A Phosphoserine modification is found at Ser212. The short motif at 223–225 (KEN) is the KEN box 2 element. Over residues 245-259 (SREKQLSLKQSEENR) the composition is skewed to basic and acidic residues. Over residues 266-300 (LQSSSFYGSRTGSKDYSSGSTNLDRTNVSGQTPSA) the composition is skewed to polar residues. Positions 343-953 (QGFSNLGNTC…SGYIFFYMHK (611 aa)) constitute a USP domain. Cys352 (nucleophile) is an active-site residue. The residue at position 630 (Ser630) is a Phosphoserine; by CDK2. Ser652 and Ser654 each carry phosphoserine. 2 disordered regions span residues 673–704 (GCEQQQDDLEKDSKPCRIEPDKSELENSGFDG) and 719–831 (KREA…EQKE). Basic and acidic residues-rich tracts occupy residues 683 to 697 (KDSKPCRIEPDKSEL) and 719 to 734 (KREASPTLSHEDDDKP). The UIM 1 domain maps to 706–725 (SEEELLAAVLEMSKREASPT). Ser772 carries the post-translational modification Phosphoserine. Residues 776-788 (ITKDCDENKENKT) show a composition bias toward basic and acidic residues. The short motif at 784–786 (KEN) is the KEN box 3 element. UIM domains are found at residues 808 to 827 (REEQELQQALAQSLQEQEAW) and 830 to 849 (KEDDDLKRATELSLQEFNNS). The span at 813-824 (LQQALAQSLQEQ) shows a compositional bias: low complexity. The Proton acceptor role is filled by His908.

This sequence belongs to the peptidase C19 family. Interacts with FZR1/CDH1. Interacts with CDT1. Post-translationally, polyubiquitinated via 'Lys-11'-linked ubiquitin by the APC(CDH1) complex during late mitosis, leading to its degradation. Able to mediate auto-deubiquitination. Phosphorylated at Ser-630 by CDK2 during G1/S phase but not during mitosis; phosphorylation at Ser-630 is required for deubiquitinase activity. Also polyubiquitinated during early G1 phase, without leading to degradation. Phosphorylated at Ser-114 by ATM following DNA damage, which in turn increases its deubiquitination activity towards BLM.

The protein resides in the nucleus. It localises to the chromosome. It catalyses the reaction Thiol-dependent hydrolysis of ester, thioester, amide, peptide and isopeptide bonds formed by the C-terminal Gly of ubiquitin (a 76-residue protein attached to proteins as an intracellular targeting signal).. Deubiquitinase that plays a role in different processes including cell cycle regulation, DNA replication or DNA damage response. Antagonizes the anaphase-promoting complex (APC/C) during G1/S transition by mediating deubiquitination of cyclin-A (CCNA1 and CCNA2), thereby promoting S phase entry. Specifically mediates deubiquitination of 'Lys-11'-linked polyubiquitin chains, a specific ubiquitin-linkage type mediated by the APC/C complex. Phosphorylation at Ser-628 during G1/S phase maximizes the deubiquitinase activity, leading to prevent degradation of cyclin-A (CCNA1 and CCNA2). Plays an important role in the regulation of DNA replication by stabilizing the licensing factor CDT1. Also plays an essential role beyond S-phase entry to promote the efficiency and fidelity of replication by deubiquitinating checkpoint kinase 1/CHK1, promoting its stability. Sustains the DNA damage response (DDR) by deubiquitinating and stabilizing the ATP-dependent DNA helicase BLM. Mechanistically, DNA double-strand breaks (DSB) promotes ATM-mediated phosphorylation of USP37 and enhances the binding between USP37 and BLM. Promotes cell migration by deubiquitinating and stabilizing the epithelial-mesenchymal transition (EMT)-inducing transcription factor SNAI. Plays a role in the regulation of mitotic spindle assembly and mitotic progression by associating with chromatin-associated WAPL and stabilizing it through deubiquitination. This is Ubiquitin carboxyl-terminal hydrolase 37 (USP37) from Canis lupus familiaris (Dog).